Reading from the N-terminus, the 250-residue chain is Aliphatic sulfonates import ATP-binding protein SsuB 2 (250 aa).

An ABC transporter domain is found at 13–229; it reads VRLQGLTRSF…SYRDPLLGEY (217 aa). ATP is bound at residue 45-52; sequence GHSGSGKS.

It belongs to the ABC transporter superfamily. Aliphatic sulfonates importer (TC 3.A.1.17.2) family. As to quaternary structure, the complex is composed of two ATP-binding proteins (SsuB), two transmembrane proteins (SsuC) and a solute-binding protein (SsuA).

Its subcellular location is the cell membrane. The catalysed reaction is ATP + H2O + aliphatic sulfonate-[sulfonate-binding protein]Side 1 = ADP + phosphate + aliphatic sulfonateSide 2 + [sulfonate-binding protein]Side 1.. Part of the ABC transporter complex SsuABC involved in aliphatic sulfonates import. Responsible for energy coupling to the transport system. The polypeptide is Aliphatic sulfonates import ATP-binding protein SsuB 2 (Streptomyces avermitilis (strain ATCC 31267 / DSM 46492 / JCM 5070 / NBRC 14893 / NCIMB 12804 / NRRL 8165 / MA-4680)).